Consider the following 293-residue polypeptide: Short-chain dehydrogenase/reductase PhomF' (293 aa).

NADP(+) is bound by residues Ile31 and Asn102. The active-site Proton donor is the Ser175. The NADP(+) site is built by Tyr190, Lys194, and Ser225. Residue Tyr190 is the Proton acceptor of the active site. The active-site Lowers pKa of active site Tyr is the Lys194.

Belongs to the short-chain dehydrogenases/reductases (SDR) family.

Its function is as follows. Short-chain dehydrogenase/reductase; part of the gene cluster that mediates the biosynthesis of the phomopsins, a group of hexapeptide mycotoxins which infects lupins and causes lupinosis disease in livestock. The role of phomF' within the phomopsins biosynthesis pathway has still to be determined. The pathway starts with the processing of the precursor phomA by several endopeptidases including kexin proteases as well as the cluster-specific S41 family peptidase phomP1 and the oligopeptidase phomG to produce 10 identical copies of the hexapeptide Tyr-Val-Ile-Pro-Ile-Asp. After being excised from the precursor peptide, the core peptides are cyclized and modified post-translationally by enzymes encoded within the gene cluster. The timing and order of proteolysis of the phomA precursor and PTMs are still unknown. Two tyrosinase-like enzymes, phomQ1 and phomQ2, catalyze the chlorination and hydroxylation of Tyr, respectively. PhomYb, is proposed to be involved in the construction of the macrocyclic structure. The other 4 ustYa family proteins may be involved in PTMs that generate the unique structure of phomopsin A. PhomYa is required for the hydroxylation of C-beta of Tyr. PhomYc, phomYd, and phomYe are responsible for the biosynthesis of 2,3-dehydroisoleucine (dIle), 2,3-dehydroaspartic acid (dAsp), and 3,4-dehydroproline (dPro), respectively. While dIle formation by phomYc is indispensable for the installation of dAsp by phomYd, the order of the other PTMs have not been elucidated yet. Most of the biosynthetic enzymes likely have broad substrate specificity, and thus, there might be a metabolic grid from a precursor to phomopsin A. The enzyme(s) responsible for the biosynthesis of 3,4-dehydrovaline (dVal) have also not been identified yet. Finally, phomM acts as an S-adenosylmethionine-dependent alpha-N-methyltransferase that catalyzes two successive N-methylation reactions, converting N-desmethyl-phomopsin A to phomopsin A and phomopsin A further to an N,N-dimethylated congener called phomopsin E. This chain is Short-chain dehydrogenase/reductase PhomF', found in Diaporthe leptostromiformis (Lupinosis disease fungus).